Consider the following 315-residue polypeptide: Coproporphyrin III ferrochelatase (315 aa).

Fe-coproporphyrin III contacts are provided by residues Y13, R30, 46-47, S54, and Y125; that span reads RY. H183 and E264 together coordinate Fe(2+).

This sequence belongs to the ferrochelatase family.

The protein resides in the cytoplasm. It catalyses the reaction Fe-coproporphyrin III + 2 H(+) = coproporphyrin III + Fe(2+). It participates in porphyrin-containing compound metabolism; protoheme biosynthesis. Involved in coproporphyrin-dependent heme b biosynthesis. Catalyzes the insertion of ferrous iron into coproporphyrin III to form Fe-coproporphyrin III. The sequence is that of Coproporphyrin III ferrochelatase from Anoxybacillus flavithermus (strain DSM 21510 / WK1).